The sequence spans 449 residues: Na(+)-translocating NADH-quinone reductase subunit A (449 aa).

The protein belongs to the NqrA family. In terms of assembly, composed of six subunits; NqrA, NqrB, NqrC, NqrD, NqrE and NqrF.

It catalyses the reaction a ubiquinone + n Na(+)(in) + NADH + H(+) = a ubiquinol + n Na(+)(out) + NAD(+). NQR complex catalyzes the reduction of ubiquinone-1 to ubiquinol by two successive reactions, coupled with the transport of Na(+) ions from the cytoplasm to the periplasm. NqrA to NqrE are probably involved in the second step, the conversion of ubisemiquinone to ubiquinol. The sequence is that of Na(+)-translocating NADH-quinone reductase subunit A from Actinobacillus pleuropneumoniae serotype 5b (strain L20).